The sequence spans 234 residues: Large ribosomal subunit protein uL1 (234 aa).

Belongs to the universal ribosomal protein uL1 family. Part of the 50S ribosomal subunit.

In terms of biological role, binds directly to 23S rRNA. The L1 stalk is quite mobile in the ribosome, and is involved in E site tRNA release. Its function is as follows. Protein L1 is also a translational repressor protein, it controls the translation of the L11 operon by binding to its mRNA. The sequence is that of Large ribosomal subunit protein uL1 from Anaeromyxobacter dehalogenans (strain 2CP-1 / ATCC BAA-258).